The chain runs to 161 residues: 6,7-dimethyl-8-ribityllumazine synthase (161 aa).

5-amino-6-(D-ribitylamino)uracil is bound by residues tryptophan 31, 65-67 (TFE), and 89-91 (CVV). 94 to 95 (DT) is a (2S)-2-hydroxy-3-oxobutyl phosphate binding site. Histidine 97 serves as the catalytic Proton donor. A 5-amino-6-(D-ribitylamino)uracil-binding site is contributed by phenylalanine 122. Arginine 136 contacts (2S)-2-hydroxy-3-oxobutyl phosphate.

The protein belongs to the DMRL synthase family.

It carries out the reaction (2S)-2-hydroxy-3-oxobutyl phosphate + 5-amino-6-(D-ribitylamino)uracil = 6,7-dimethyl-8-(1-D-ribityl)lumazine + phosphate + 2 H2O + H(+). Its pathway is cofactor biosynthesis; riboflavin biosynthesis; riboflavin from 2-hydroxy-3-oxobutyl phosphate and 5-amino-6-(D-ribitylamino)uracil: step 1/2. In terms of biological role, catalyzes the formation of 6,7-dimethyl-8-ribityllumazine by condensation of 5-amino-6-(D-ribitylamino)uracil with 3,4-dihydroxy-2-butanone 4-phosphate. This is the penultimate step in the biosynthesis of riboflavin. This Porphyromonas gingivalis (strain ATCC 33277 / DSM 20709 / CIP 103683 / JCM 12257 / NCTC 11834 / 2561) protein is 6,7-dimethyl-8-ribityllumazine synthase.